Reading from the N-terminus, the 591-residue chain is Probable indole-3-acetic acid-amido synthetase GH3.11 (591 aa).

The protein belongs to the IAA-amido conjugating enzyme family. Expressed in etiolated and green seedlings, roots, callus and highly in flowers.

Its function is as follows. May catalyze the synthesis of indole-3-acetic acid (IAA)-amino acid conjugates, providing a mechanism for the plant to cope with the presence of excess auxin. This chain is Probable indole-3-acetic acid-amido synthetase GH3.11 (GH3.11), found in Oryza sativa subsp. japonica (Rice).